The chain runs to 366 residues: Aminomethyltransferase (366 aa).

Belongs to the GcvT family. As to quaternary structure, the glycine cleavage system is composed of four proteins: P, T, L and H.

It catalyses the reaction N(6)-[(R)-S(8)-aminomethyldihydrolipoyl]-L-lysyl-[protein] + (6S)-5,6,7,8-tetrahydrofolate = N(6)-[(R)-dihydrolipoyl]-L-lysyl-[protein] + (6R)-5,10-methylene-5,6,7,8-tetrahydrofolate + NH4(+). In terms of biological role, the glycine cleavage system catalyzes the degradation of glycine. The chain is Aminomethyltransferase from Thermosynechococcus vestitus (strain NIES-2133 / IAM M-273 / BP-1).